Here is a 418-residue protein sequence, read N- to C-terminus: Glutamyl-tRNA reductase (418 aa).

Residues 49–52 (TCNR), serine 107, 112–114 (EPQ), and glutamine 118 contribute to the substrate site. Catalysis depends on cysteine 50, which acts as the Nucleophile. 187–192 (GAGETI) serves as a coordination point for NADP(+).

This sequence belongs to the glutamyl-tRNA reductase family. In terms of assembly, homodimer.

It catalyses the reaction (S)-4-amino-5-oxopentanoate + tRNA(Glu) + NADP(+) = L-glutamyl-tRNA(Glu) + NADPH + H(+). The protein operates within porphyrin-containing compound metabolism; protoporphyrin-IX biosynthesis; 5-aminolevulinate from L-glutamyl-tRNA(Glu): step 1/2. Catalyzes the NADPH-dependent reduction of glutamyl-tRNA(Glu) to glutamate 1-semialdehyde (GSA). The sequence is that of Glutamyl-tRNA reductase from Vibrio campbellii (strain ATCC BAA-1116).